A 296-amino-acid chain; its full sequence is ATP synthase gamma chain (296 aa).

Belongs to the ATPase gamma chain family. F-type ATPases have 2 components, CF(1) - the catalytic core - and CF(0) - the membrane proton channel. CF(1) has five subunits: alpha(3), beta(3), gamma(1), delta(1), epsilon(1). CF(0) has three main subunits: a, b and c.

It localises to the cell membrane. Functionally, produces ATP from ADP in the presence of a proton gradient across the membrane. The gamma chain is believed to be important in regulating ATPase activity and the flow of protons through the CF(0) complex. This chain is ATP synthase gamma chain, found in Pseudarthrobacter chlorophenolicus (strain ATCC 700700 / DSM 12829 / CIP 107037 / JCM 12360 / KCTC 9906 / NCIMB 13794 / A6) (Arthrobacter chlorophenolicus).